We begin with the raw amino-acid sequence, 161 residues long: Suppressor of kinetochore protein 1 (161 aa).

The interval 102 to 161 (VLASNYLDIKPLLDTGCKTVANMIRGKSPEDIRKTFNIPNDFTPEEEEQIRKENEWAEDR) is interaction with the F-box domain of F-box proteins.

It belongs to the SKP1 family. Essential component of the E3 ubiquitin ligase Skp1-Cullin-1-F-box (SCF) complex. Interacts with cul1, fbh1, mcs2, pip1, pof1, pof2, pof3, pof4, pof5, pof6, pof7, pof8, pof9, pof10, pof11, pof12, pof13, pof14, pop1, pop2 and tfb3. Forms a complex with pof6 and sip1. Component of the RAVE complex composed of rav1, rav2 and skp1.

The protein localises to the cytoplasm. It localises to the nucleus. Functionally, required for cig2 degradation in the G2 and M phases of the cell cycle. Together with pof6, essential for septum processing and cell separation. Involved in mitotic progression, essential for the execution of anaphase B; required for coordinated structural alterations of mitotic spindles and segregation of nuclear membrane structures at anaphase. Involved in the DNA damage checkpoint pathway and maintenance of genome integrity. Component of the RAVE complex which is required for stable assembly of the vacuolar ATPase complex V-ATPase. The polypeptide is Suppressor of kinetochore protein 1 (Schizosaccharomyces pombe (strain 972 / ATCC 24843) (Fission yeast)).